A 221-amino-acid polypeptide reads, in one-letter code: UPF0758 protein KPN78578_39390 (221 aa).

In terms of domain architecture, MPN spans 99–221 (ALVTPSMTRE…YVSFAERGWI (123 aa)). Zn(2+)-binding residues include His-170, His-172, and Asp-183. The short motif at 170–183 (HNHPSGSPEPSQAD) is the JAMM motif element.

The protein belongs to the UPF0758 family. YicR subfamily.

The sequence is that of UPF0758 protein KPN78578_39390 from Klebsiella pneumoniae subsp. pneumoniae (strain ATCC 700721 / MGH 78578).